The chain runs to 803 residues: Mechanosensitive cation channel TMEM63A (803 aa).

The Extracellular segment spans residues 1-51 (MTDSPFLELWQSRTVAIRERLGIGDQPNDSYCYNSAKNSTVLQGVTFGGIP). A helical transmembrane segment spans residues 52 to 74 (TVLFIDVSCFLFLIVVFSIIRRK). Over 75–133 (FWDYGRIALVSEGNSESRFRRLSSSSSGQQDFESELGCCSWLTAIFRLHDDQILEWCGE) the chain is Cytoplasmic. The chain crosses the membrane as a helical span at residues 134–166 (DAIHYLSFQRHIIFLLVVVSCLSLCIILPVNLS). At 167-190 (GDLLDKDPYSFGRTTIANLQTDNN) the chain is on the extracellular side. The helical transmembrane segment at 191–216 (LLWLHTIFAILYLILTVVFMRHHTQS) threads the bilayer. Residues 217-415 (IKYKEESLVR…CWKNLSIQGF (199 aa)) are Cytoplasmic-facing. The segment at 218 to 413 (KYKEESLVRR…DICWKNLSIQ (196 aa)) is intracellular linker IL2; confers mechanosensitivity. The helical transmembrane segment at 416 to 443 (RWWFQWLGINFILFVGLFFLTTPSIILS) threads the bilayer. Residues 444 to 461 (TMDKFNVTKPIHALNDPI) lie on the Extracellular side of the membrane. A helical transmembrane segment spans residues 462–489 (ISQFFPTLLLWSFSALLPTIVCYSTLLE). Topologically, residues 490-494 (SHWTK) are cytoplasmic. The helical transmembrane segment at 495-531 (SGENRIMMTKVYIFLIFMVLILPSLGLTSLDFFFRWL) threads the bilayer. The Extracellular portion of the chain corresponds to 532 to 553 (FDKTSSEASIRLECVFLPDQGA). Residues 554–585 (FFVNYVIASAFIGNGMELLRLPGLILYTFRMV) form a helical membrane-spanning segment. The interval 554–585 (FFVNYVIASAFIGNGMELLRLPGLILYTFRMV) is gating helix. Residues 586-605 (MAKTAADRRNVKQHQAFEYE) are Cytoplasmic-facing. A helical membrane pass occupies residues 606–623 (FGAMYAWMLCVFTVIMAY). The Extracellular portion of the chain corresponds to 624–627 (SITC). The helical transmembrane segment at 628-650 (PIIVPFGLIYILLKHMVDRHNLY) threads the bilayer. The Cytoplasmic portion of the chain corresponds to 651–660 (FAYLPAKLEK). The helical transmembrane segment at 661 to 688 (RIHFAAVNQALAAPILCLFWLYFFSFLR) threads the bilayer. At 689–693 (LGLKA) the chain is on the extracellular side. The helical transmembrane segment at 694 to 708 (PLTLFTFLVLLLTIL) threads the bilayer. The Cytoplasmic segment spans residues 709–803 (VCLAYTCFGC…DSVAAADQED (95 aa)).

This sequence belongs to the CSC1 (TC 1.A.17) family. As to quaternary structure, (Microbial infection) Interacts with H.contortus GAL-1 (via domain galectin 1).

The protein resides in the lysosome membrane. Its subcellular location is the early endosome membrane. The protein localises to the cell membrane. The enzyme catalyses Ca(2+)(in) = Ca(2+)(out). Mechanosensitive cation channel with low conductance and high activation threshold. In contrast to TMEM63B, does not show phospholipid scramblase activity. Acts as a regulator of lysosomal morphology by mediating lysosomal mechanosensitivity. Important for the baby's first breath and respiration throughout life. Upon lung inflation conducts cation currents in alveolar type 1 and 2 cells triggering lamellar body exocytosis and surfactant secretion into airspace. Also acts as an osmosensitive cation channel preferentially activated by hypotonic stress. Functionally, (Microbial infection) Involved in the immunomodulatory effects exerted by H.contortus GAL-1 on host peripheral blood mononuclear cells to down-regulate host immune response. The sequence is that of Mechanosensitive cation channel TMEM63A (TMEM63A) from Capra hircus (Goat).